The following is a 531-amino-acid chain: NADH-quinone oxidoreductase subunit N (531 aa).

13 consecutive transmembrane segments (helical) span residues 13 to 33 (LAPI…EAFA), 45 to 65 (LALL…AEVI), 85 to 105 (PALA…LVIA), 150 to 170 (LFSV…TLFI), 200 to 220 (YFLL…LLYG), 242 to 262 (GLLV…VGAV), 289 to 309 (VAAF…MTWD), 310 to 330 (IQPF…VLAI), 339 to 359 (LAYS…AMSP), 365 to 385 (VFFY…LVAL), 415 to 435 (VATV…TSGF), 460 to 480 (ASAA…FTSP), and 496 to 516 (GFTA…GVWP).

Belongs to the complex I subunit 2 family. NDH-1 is composed of 14 different subunits. Subunits NuoA, H, J, K, L, M, N constitute the membrane sector of the complex.

It localises to the cell membrane. The catalysed reaction is a quinone + NADH + 5 H(+)(in) = a quinol + NAD(+) + 4 H(+)(out). Functionally, NDH-1 shuttles electrons from NADH, via FMN and iron-sulfur (Fe-S) centers, to quinones in the respiratory chain. The immediate electron acceptor for the enzyme in this species is believed to be a menaquinone. Couples the redox reaction to proton translocation (for every two electrons transferred, four hydrogen ions are translocated across the cytoplasmic membrane), and thus conserves the redox energy in a proton gradient. The polypeptide is NADH-quinone oxidoreductase subunit N (Beutenbergia cavernae (strain ATCC BAA-8 / DSM 12333 / CCUG 43141 / JCM 11478 / NBRC 16432 / NCIMB 13614 / HKI 0122)).